The following is a 390-amino-acid chain: NADH-quinone oxidoreductase subunit D (390 aa).

Belongs to the complex I 49 kDa subunit family. As to quaternary structure, NDH-1 is composed of 14 different subunits. Subunits NuoB, C, D, E, F, and G constitute the peripheral sector of the complex.

Its subcellular location is the cell inner membrane. The catalysed reaction is a quinone + NADH + 5 H(+)(in) = a quinol + NAD(+) + 4 H(+)(out). In terms of biological role, NDH-1 shuttles electrons from NADH, via FMN and iron-sulfur (Fe-S) centers, to quinones in the respiratory chain. The immediate electron acceptor for the enzyme in this species is believed to be ubiquinone. Couples the redox reaction to proton translocation (for every two electrons transferred, four hydrogen ions are translocated across the cytoplasmic membrane), and thus conserves the redox energy in a proton gradient. In Geotalea uraniireducens (strain Rf4) (Geobacter uraniireducens), this protein is NADH-quinone oxidoreductase subunit D.